The following is a 93-amino-acid chain: Small ribosomal subunit protein uS19 (93 aa).

This sequence belongs to the universal ribosomal protein uS19 family.

Its function is as follows. Protein S19 forms a complex with S13 that binds strongly to the 16S ribosomal RNA. In Helicobacter pylori (strain ATCC 700392 / 26695) (Campylobacter pylori), this protein is Small ribosomal subunit protein uS19 (rpsS).